A 92-amino-acid polypeptide reads, in one-letter code: C-C motif chemokine 22 (92 aa).

Positions 1–24 (MATLRVPLLVALVLLAVAIQTSDA) are cleaved as a signal peptide. Intrachain disulfides connect Cys-36/Cys-60 and Cys-37/Cys-76.

This sequence belongs to the intercrine beta (chemokine CC) family. As to expression, expressed by activated splenic B-lymphocytes and dendritic cells. Low expression in lung, thymocytes, lymph node, and unstimulated splenic cells.

It localises to the secreted. Functionally, chemotactic for activated T-lymphocytes. May play an important role in the collaboration of dendritic cells and B-lymphocytes with T-cells in immune responses. The polypeptide is C-C motif chemokine 22 (Ccl22) (Mus musculus (Mouse)).